The primary structure comprises 288 residues: Bifunctional protein FolD (288 aa).

Residues 166 to 168, serine 191, and isoleucine 232 contribute to the NADP(+) site; that span reads GRS.

The protein belongs to the tetrahydrofolate dehydrogenase/cyclohydrolase family. Homodimer.

The enzyme catalyses (6R)-5,10-methylene-5,6,7,8-tetrahydrofolate + NADP(+) = (6R)-5,10-methenyltetrahydrofolate + NADPH. The catalysed reaction is (6R)-5,10-methenyltetrahydrofolate + H2O = (6R)-10-formyltetrahydrofolate + H(+). It participates in one-carbon metabolism; tetrahydrofolate interconversion. In terms of biological role, catalyzes the oxidation of 5,10-methylenetetrahydrofolate to 5,10-methenyltetrahydrofolate and then the hydrolysis of 5,10-methenyltetrahydrofolate to 10-formyltetrahydrofolate. The sequence is that of Bifunctional protein FolD from Rickettsia peacockii (strain Rustic).